A 509-amino-acid polypeptide reads, in one-letter code: 2-isopropylmalate synthase (509 aa).

In terms of domain architecture, Pyruvate carboxyltransferase spans 5-267 (IQIFDTTLRD…QTALNLEETK (263 aa)). Mn(2+) is bound by residues Asp-14, His-202, His-204, and Asn-238. Residues 391–509 (KLETLQLQYV…AAENVEKVGN (119 aa)) form a regulatory domain region.

The protein belongs to the alpha-IPM synthase/homocitrate synthase family. LeuA type 1 subfamily. Homodimer. Mn(2+) serves as cofactor.

Its subcellular location is the cytoplasm. It carries out the reaction 3-methyl-2-oxobutanoate + acetyl-CoA + H2O = (2S)-2-isopropylmalate + CoA + H(+). The protein operates within amino-acid biosynthesis; L-leucine biosynthesis; L-leucine from 3-methyl-2-oxobutanoate: step 1/4. Functionally, catalyzes the condensation of the acetyl group of acetyl-CoA with 3-methyl-2-oxobutanoate (2-ketoisovalerate) to form 3-carboxy-3-hydroxy-4-methylpentanoate (2-isopropylmalate). The sequence is that of 2-isopropylmalate synthase from Staphylococcus aureus (strain bovine RF122 / ET3-1).